The following is a 72-amino-acid chain: Large ribosomal subunit protein bL28 (72 aa).

This sequence belongs to the bacterial ribosomal protein bL28 family.

The protein is Large ribosomal subunit protein bL28 of Pelodictyon phaeoclathratiforme (strain DSM 5477 / BU-1).